Here is a 419-residue protein sequence, read N- to C-terminus: Synaptosomal-associated protein 47 (419 aa).

T-SNARE coiled-coil homology domains follow at residues 109–171 and 356–418; these read AANP…LTEL and KDWP…MRKL.

The protein belongs to the SVAP1 family. Associates with the BLOC-1 complex. Interacts with BLOC1S6. Forms a complex containing SNAP47, VAMP2 and STX1A.

The protein localises to the endomembrane system. Its subcellular location is the cytoplasm. It is found in the perinuclear region. May play a role in intracellular membrane fusion. The chain is Synaptosomal-associated protein 47 (Snap47) from Rattus norvegicus (Rat).